The primary structure comprises 397 residues: Serpin B10 (397 aa).

The cysteines at positions 68 and 395 are disulfide-linked. The Nuclear localization signal motif lies at lysine 74–lysine 77.

Belongs to the serpin family. Ov-serpin subfamily. As to expression, expressed specifically in myeloid cells and the bone marrow.

The protein resides in the nucleus. It localises to the cytoplasm. Functionally, protease inhibitor that may play a role in the regulation of protease activities during hematopoiesis and apoptosis induced by TNF. May regulate protease activities in the cytoplasm and in the nucleus. In Homo sapiens (Human), this protein is Serpin B10 (SERPINB10).